The primary structure comprises 376 residues: NifS-like protein (376 aa).

Residues 58-59 (SE) and 184-186 (SLN) each bind pyridoxal 5'-phosphate.

This sequence belongs to the class-V pyridoxal-phosphate-dependent aminotransferase family. NifS/IscS subfamily. Requires pyridoxal 5'-phosphate as cofactor.

Its subcellular location is the virion. The sequence is that of NifS-like protein from African swine fever virus (isolate Tick/Malawi/Lil 20-1/1983) (ASFV).